Here is an 874-residue protein sequence, read N- to C-terminus: Alanine--tRNA ligase (874 aa).

Residues His-564, His-568, Cys-665, and His-669 each contribute to the Zn(2+) site.

This sequence belongs to the class-II aminoacyl-tRNA synthetase family. It depends on Zn(2+) as a cofactor.

It is found in the cytoplasm. It carries out the reaction tRNA(Ala) + L-alanine + ATP = L-alanyl-tRNA(Ala) + AMP + diphosphate. Functionally, catalyzes the attachment of alanine to tRNA(Ala) in a two-step reaction: alanine is first activated by ATP to form Ala-AMP and then transferred to the acceptor end of tRNA(Ala). Also edits incorrectly charged Ser-tRNA(Ala) and Gly-tRNA(Ala) via its editing domain. The polypeptide is Alanine--tRNA ligase (Burkholderia pseudomallei (strain 668)).